Here is a 208-residue protein sequence, read N- to C-terminus: Transcription factor atf-4 homolog (208 aa).

2 disordered regions span residues 18 to 47 (HNQT…YFNP) and 106 to 165 (ERRS…EKEE). Over residues 110-120 (NSSASPASNWS) the composition is skewed to low complexity. Positions 121–141 (SDEHDSQSEKSYHPYKTPEKK) are enriched in basic and acidic residues. In terms of domain architecture, bZIP spans 138–201 (PEKKERKKAQ…RYFKKFMTEM (64 aa)). Positions 140–163 (KKERKKAQNRLAATRYREKKRREK) are basic motif. Residues 173 to 187 (LSVTNGKLKDQVSEL) are leucine-zipper.

The protein belongs to the bZIP family.

It localises to the nucleus. Its function is as follows. Transcription factor. Involved in positively modulating longevity and stress tolerance, probably acting by positively regulating expression of transsulfuration enzyme cth-2, leading to increased hydrogen sulfide production and therefore increased protein persulfidation, a protective modification of redox-reactive cysteines. May mediate longevity and increased stress resistance induced by mTORC1 suppression. This is Transcription factor atf-4 homolog from Caenorhabditis elegans.